The sequence spans 105 residues: uncharacterized protein (105 aa).

The first 19 residues, 1-19 (MKLVFIFATAAIMGVVVYG), serve as a signal peptide directing secretion.

This is an uncharacterized protein from Magallana gigas (Pacific oyster).